The sequence spans 154 residues: Ribosomal RNA large subunit methyltransferase H (154 aa).

Residues Gly-103 and Phe-122–Phe-127 contribute to the S-adenosyl-L-methionine site.

This sequence belongs to the RNA methyltransferase RlmH family. As to quaternary structure, homodimer.

The protein resides in the cytoplasm. The enzyme catalyses pseudouridine(1915) in 23S rRNA + S-adenosyl-L-methionine = N(3)-methylpseudouridine(1915) in 23S rRNA + S-adenosyl-L-homocysteine + H(+). Specifically methylates the pseudouridine at position 1915 (m3Psi1915) in 23S rRNA. This chain is Ribosomal RNA large subunit methyltransferase H, found in Caldicellulosiruptor saccharolyticus (strain ATCC 43494 / DSM 8903 / Tp8T 6331).